A 309-amino-acid chain; its full sequence is Shugoshin (309 aa).

The stretch at Asn-42 to Thr-77 forms a coiled coil. 2 disordered regions span residues Phe-165–Arg-195 and Glu-210–Phe-309. The span at Asn-167–Asn-178 shows a compositional bias: low complexity. The segment covering Pro-184–Gly-193 has biased composition (basic residues).

Belongs to the shugoshin family. As to expression, expressed in gonads.

It localises to the nucleus. It is found in the chromosome. Its subcellular location is the centromere. Component of cell cycle checkpoints, which ensures chromosome segregation during meiosis and mitosis. During meiotic prophase, it is involved in the regulation of the synapsis checkpoint, which monitors whether homologous chromosomes have synapsed, and the DNA damage response. Plays a central role in chromosome cohesion during cell division by preventing premature dissociation of cohesin complex after prophase, when most of cohesin complex dissociates from chromosomes arms. This is Shugoshin from Caenorhabditis elegans.